Here is a 468-residue protein sequence, read N- to C-terminus: 6-phospho-beta-galactosidase (468 aa).

The D-galactose 6-phosphate site is built by glutamine 19, histidine 116, asparagine 159, glutamate 160, and asparagine 297. Glutamate 160 functions as the Proton donor in the catalytic mechanism. The active-site Nucleophile is the glutamate 375. Positions 428, 429, 435, and 437 each coordinate D-galactose 6-phosphate.

It belongs to the glycosyl hydrolase 1 family.

It carries out the reaction a 6-phospho-beta-D-galactoside + H2O = D-galactose 6-phosphate + an alcohol. Its pathway is carbohydrate metabolism; lactose degradation; D-galactose 6-phosphate and beta-D-glucose from lactose 6-phosphate: step 1/1. In Streptococcus uberis (strain ATCC BAA-854 / 0140J), this protein is 6-phospho-beta-galactosidase.